We begin with the raw amino-acid sequence, 564 residues long: Alpha-amylase 3 (564 aa).

Positions 1 to 21 (MFGVYFVLLFLSSALIHVANA) are cleaved as a signal peptide. The cysteines at positions 51 and 59 are disulfide-linked. Substrate is bound by residues Asn-56 and Trp-105. Position 143 (Asn-143) interacts with Ca(2+). A disulfide bridge connects residues Cys-172 and Cys-188. N-linked (GlcNAc...) asparagine glycosylation is present at Asn-181. Asp-198 is a Ca(2+) binding site. Position 227 (Arg-227) interacts with substrate. Asp-229 lines the Ca(2+) pocket. Residue Asp-229 is the Nucleophile of the active site. 232-233 (KM) contacts substrate. N-linked (GlcNAc...) asparagine glycosylation is present at Asn-235. Glu-253 is a binding site for Ca(2+). Glu-253 (proton donor) is an active-site residue. Cys-263 and Cys-306 form a disulfide bridge. 2 N-linked (GlcNAc...) asparagine glycosylation sites follow: Asn-282 and Asn-305. Substrate is bound by residues Asp-322 and Arg-369. Residues Asn-438, Asn-447, and Asn-498 are each glycosylated (N-linked (GlcNAc...) asparagine). Ser-538 is lipidated: GPI-anchor amidated serine. Positions 539 to 564 (SSRLILSFKTLVFGLGVTAMLFVLFF) are cleaved as a propeptide — removed in mature form.

The protein belongs to the glycosyl hydrolase 13 family. Ca(2+) serves as cofactor. N-glycosylated.

It localises to the cell membrane. It carries out the reaction Endohydrolysis of (1-&gt;4)-alpha-D-glucosidic linkages in polysaccharides containing three or more (1-&gt;4)-alpha-linked D-glucose units.. Has a role in cell wall biosynthesis where it is involved in maintaining cell wall strength and shape. This chain is Alpha-amylase 3 (aah3), found in Schizosaccharomyces pombe (strain 972 / ATCC 24843) (Fission yeast).